The following is a 558-amino-acid chain: Glutamine-dependent NAD(+) synthetase (558 aa).

The CN hydrolase domain maps to 2 to 262 (FTIALAQLNP…LALLSYDLSS (261 aa)). Glutamate 42 functions as the Proton acceptor; for glutaminase activity in the catalytic mechanism. The active-site For glutaminase activity is lysine 117. Residue tyrosine 123 participates in L-glutamine binding. Cysteine 153 serves as the catalytic Nucleophile; for glutaminase activity. The L-glutamine site is built by serine 190 and lysine 196. Positions 284–558 (ALVLGVGDYL…IAQAFHPQGS (275 aa)) are ligase. Residue 304-311 (GLSGGIDS) coordinates ATP. Asparagine 387 lines the deamido-NAD(+) pocket. ATP is bound at residue threonine 411. 2 residues coordinate deamido-NAD(+): glutamate 416 and lysine 526.

This sequence in the C-terminal section; belongs to the NAD synthetase family.

It carries out the reaction deamido-NAD(+) + L-glutamine + ATP + H2O = L-glutamate + AMP + diphosphate + NAD(+) + H(+). The protein operates within cofactor biosynthesis; NAD(+) biosynthesis; NAD(+) from deamido-NAD(+) (L-Gln route): step 1/1. In terms of biological role, catalyzes the ATP-dependent amidation of deamido-NAD to form NAD. Uses L-glutamine as a nitrogen source. The protein is Glutamine-dependent NAD(+) synthetase of Synechocystis sp. (strain ATCC 27184 / PCC 6803 / Kazusa).